Reading from the N-terminus, the 529-residue chain is Polygalacturonase (529 aa).

The signal sequence occupies residues 1–21 (MNHRYTLLALAAAALSAGAHA). The Proton donor role is filled by Asp305. His331 is a catalytic residue. The required for PGA export across the outer membrane and catalytic activity stretch occupies residues 516–529 (AFVPLKSVAPTSPI).

It belongs to the glycosyl hydrolase 28 family. As to quaternary structure, monomer.

The protein resides in the secreted. The enzyme catalyses (1,4-alpha-D-galacturonosyl)n+m + H2O = (1,4-alpha-D-galacturonosyl)n + (1,4-alpha-D-galacturonosyl)m.. Its function is as follows. Contributes to the wilt disease production on tomato. The protein is Polygalacturonase (pglA) of Ralstonia solanacearum (Pseudomonas solanacearum).